Reading from the N-terminus, the 179-residue chain is MGKQQETILIIGAGISGLATSRLLTNNGIPNIVFEASTPDRSQGFAISLQEFGYSTLLAALGDLPLSSLIRAVAPDRQIGGTGWIDQALRDNRTGELLVAPDLTTTKQTIVRANRNALRHWIADCGEDELDVRYGHKLQSIKGKLGDVTAIFENGAKYKGSLIIAADGVNSTYSPRRGS.

The first 21 residues, 1-21 (MGKQQETILIIGAGISGLATS), serve as a signal peptide directing secretion. Residues E35 and A46 each contribute to the FAD site. N92 carries N-linked (GlcNAc...) asparagine glycosylation. Position 119 (R119) interacts with FAD. A glycan (N-linked (GlcNAc...) asparagine) is linked at N170.

Belongs to the paxM FAD-dependent monooxygenase family. The cofactor is FAD.

The protein operates within secondary metabolite biosynthesis. In terms of biological role, FAD-dependent monooxygenase; part of the gene cluster that mediates the biosynthesis of neosartoricin B, a prenylated anthracenone that probably exhibits T-cell antiproliferative activity, suggestive of a physiological role as an immunosuppressive agent. The non-reducing polyketide synthase nscA probably synthesizes and cyclizes the decaketide backbone. The hydrolase nscB then mediates the product release through hydrolysis followed by spontaneous decarboxylation. The prenyltransferase nscD catalyzes the addition of the dimethylallyl group to the aromatic C5. The FAD-dependent monooxygenase nscC is then responsible for the stereospecific hydroxylation at C2. Neosartoricin B can be converted into two additional compounds neosartoricins C and D. Neosartoricin C is a spirocyclic compound that is cyclized through the attack of C3 hydroxyl on C14, followed by dehydration. On the other hand, neosartoricin D is a further cyclized compound in which attack of C2 on C14 in neosartoricin C results in the formation of the acetal-containing dioxabicyclo-octanone ring. Both of these compounds are novel and possibly represent related metabolites of the gene cluster. The sequence is that of FAD-dependent monooxygenase nscC from Trichophyton equinum (strain ATCC MYA-4606 / CBS 127.97) (Horse ringworm fungus).